We begin with the raw amino-acid sequence, 790 residues long: Probable E3 ubiquitin-protein ligase MARCHF10 (790 aa).

Positions 33 to 240 are disordered; it reads LKRQEHKKEP…PQNEPHTALS (208 aa). A compositionally biased stretch (basic and acidic residues) spans 34–48; sequence KRQEHKKEPNEKKQE. Positions 61 to 70 are enriched in low complexity; it reads FSSGSSCKQS. Ser-78 carries the phosphoserine modification. Basic and acidic residues predominate over residues 218 to 227; it reads PLERQKKGDP. The segment covering 230 to 240 has biased composition (polar residues); it reads RPQNEPHTALS. The stretch at 284-308 forms a coiled coil; it reads LSLNNEQENYDTEEETRTEEELLLA. 2 disordered regions span residues 323–416 and 507–569; these read GTSA…EDVS and LSPI…RHLQ. Polar residues-rich tracts occupy residues 355-370, 406-416, and 511-520; these read RKTSVTEPTTKQSSPG, GVTQVSAEDVS, and RNRNPSAASE. A compositionally biased stretch (basic and acidic residues) spans 521–533; the sequence is SHSEDTQGEEERA. The span at 534–563 shows a compositional bias: polar residues; the sequence is STSQAQESPLLSDLPNPQSSMALGDSPSSP. Residues 633–703 form an RING-CH-type zinc finger; the sequence is DSEEEGDLCR…EMCKQGLLVD (71 aa). Residues Cys-641, Cys-644, Cys-659, Cys-661, His-669, Cys-672, Cys-693, and Cys-696 each contribute to the Zn(2+) site. The disordered stretch occupies residues 757-790; sequence ERMSRNYPQPRPEESESSESGDGNESNVYPGRVI. Low complexity predominate over residues 774 to 783; the sequence is SESGDGNESN.

The enzyme catalyses S-ubiquitinyl-[E2 ubiquitin-conjugating enzyme]-L-cysteine + [acceptor protein]-L-lysine = [E2 ubiquitin-conjugating enzyme]-L-cysteine + N(6)-ubiquitinyl-[acceptor protein]-L-lysine.. Its pathway is protein modification; protein ubiquitination. Its function is as follows. E3 ubiquitin-protein ligase. E3 ubiquitin ligases accept ubiquitin from an E2 ubiquitin-conjugating enzyme in the form of a thioester and then directly transfer the ubiquitin to targeted substrates. The polypeptide is Probable E3 ubiquitin-protein ligase MARCHF10 (Marchf10) (Rattus norvegicus (Rat)).